The sequence spans 137 residues: Large ribosomal subunit protein uL16 (137 aa).

It belongs to the universal ribosomal protein uL16 family. In terms of assembly, part of the 50S ribosomal subunit.

Binds 23S rRNA and is also seen to make contacts with the A and possibly P site tRNAs. This chain is Large ribosomal subunit protein uL16, found in Psychrobacter sp. (strain PRwf-1).